The chain runs to 301 residues: NADH-cytochrome b5 reductase 3 (301 aa).

Gly2 is lipidated: N-myristoyl glycine. The region spanning 40-152 (DIKYSLRLID…RGPNGLLVYQ (113 aa)) is the FAD-binding FR-type domain. The residue at position 42 (Lys42) is an N6-acetyllysine. Tyr43 bears the Phosphotyrosine mark. Positions 92, 93, 94, 109, 111, and 114 each coordinate FAD. Residue Lys120 is modified to N6-acetyllysine. Lys126, Met127, Ser128, and Thr185 together coordinate FAD.

This sequence belongs to the flavoprotein pyridine nucleotide cytochrome reductase family. In terms of assembly, component of a complex composed of cytochrome b5, NADH-cytochrome b5 reductase (CYB5R3) and MTARC2. Interacts with MTLN; the interaction is required to maintain cellular lipid composition and leads to stimulation of mitochondrial respiratory complex I activity. FAD is required as a cofactor.

The protein localises to the endoplasmic reticulum membrane. It localises to the mitochondrion outer membrane. It catalyses the reaction 2 Fe(III)-[cytochrome b5] + NADH = 2 Fe(II)-[cytochrome b5] + NAD(+) + H(+). Functionally, catalyzes the reduction of two molecules of cytochrome b5 using NADH as the electron donor. The polypeptide is NADH-cytochrome b5 reductase 3 (CYB5R3) (Macaca fascicularis (Crab-eating macaque)).